We begin with the raw amino-acid sequence, 610 residues long: Aspercryptin biosynthesis cluster-specific transcription regulator atnN (610 aa).

The segment covering 1 to 26 (MAPKDSQVSASNEMTGNPPSSVQGRS) has biased composition (polar residues). Positions 1–27 (MAPKDSQVSASNEMTGNPPSSVQGRSR) are disordered. A DNA-binding region (zn(2)-C6 fungal-type) is located at residues 30–57 (CITCRIRRVKCDEERPHCRRCQSTGRKC). Disordered regions lie at residues 61–81 (TPLTGQQPKQQPPQQAAKAGS) and 427–493 (AGST…LPRP). Composition is skewed to low complexity over residues 66 to 79 (QQPKQQPPQQAAKA) and 437 to 474 (SRAGSPSGSRSRSMSTSSSASRDDSPTTTTTTTTTPTP).

It localises to the nucleus. Its function is as follows. Transcription factor that positively regulates the cluster that mediate the production of aspercryptins, linear lipopeptides built from six amino acids including 2 highly unusual and nonproteogenic amino acids, 2-amino-octanoic acid (2aoa) and 2-amino-dodecanol (2adol). The polypeptide is Aspercryptin biosynthesis cluster-specific transcription regulator atnN (Emericella nidulans (strain FGSC A4 / ATCC 38163 / CBS 112.46 / NRRL 194 / M139) (Aspergillus nidulans)).